Consider the following 611-residue polypeptide: Mitochondrial distribution and morphology protein 34 (611 aa).

Residues 1 to 195 enclose the SMP-LTD domain; sequence MAFNFNWSPL…LPAIIHRLSL (195 aa). Over residues 325 to 342 the composition is skewed to polar residues; that stretch reads SAPLSSQDTASVASSQSR. 4 disordered regions span residues 325–347, 361–402, 415–544, and 587–611; these read SAPLSSQDTASVASSQSRPGLPS, RHSK…STIT, SIIP…PTYT, and SYVGSGSGSGGFWDRSHTPPPAYRH. Basic residues predominate over residues 361–373; sequence RHSKAHARKRKKR. Basic and acidic residues-rich tracts occupy residues 374–385 and 444–459; these read VIDLRPHRKPTD and TLRDRIVDRDDAERTN. Positions 520 to 529 are enriched in pro residues; the sequence is PLGPPAPAPI.

Belongs to the MDM34 family. Component of the ER-mitochondria encounter structure (ERMES) or MDM complex, composed of MMM1, MDM10, MDM12 and MDM34.

Its subcellular location is the mitochondrion outer membrane. Functionally, component of the ERMES/MDM complex, which serves as a molecular tether to connect the endoplasmic reticulum (ER) and mitochondria. Components of this complex are involved in the control of mitochondrial shape and protein biogenesis, and function in nonvesicular lipid trafficking between the ER and mitochondria. MDM34 is required for the interaction of the ER-resident membrane protein MMM1 and the outer mitochondrial membrane-resident beta-barrel protein MDM10. The chain is Mitochondrial distribution and morphology protein 34 from Paracoccidioides brasiliensis (strain Pb18).